A 733-amino-acid chain; its full sequence is MALSEDEAEAEVSVNTKVPSCGRWNSGKLLPSGLEPDQPLHLGVEGGPLWRAEADPGCISGVFLSRVHTASKEPVADRSKPPLRGPLPSASVGTGEVLHSMGSQMEEDRLPASQDLLPALQVFGTITVCSGQEADSEDFQATLDPSQVLGLSQQPHTSGLPLPPQWKSTVSPGAPQLSSRSISASSVGSSLQDHQEKAGPQRASFANVSSPELTVPQAAHSVVGAGPPLQGSAQPLTSGSDATGLGKRHLSFQAEYWACALPNSLPPSPNRHSALWDPNKEYEDLLDYTYPLRPGPQLPKQPESHVLTEPVLQDSGVDLDSLSVSPASTLKSPTNVSHNCSSAEVPTLPFSGARESCLKRWPLGIFQKQGGTSLSSWNQLASTPRAPGTEDASWENREAALRGTAEDCLPIGEDLRMGSPQLKTKEKEPPFPRQKRGRQHVSCPACVTPGWPSEEEVGSDEEYLALPTRLTQVSSLVSYSGARPSFVNLHTGAAEEHSSLQVSDSDKPASPTLDSSHRKHPSGTSFQGPVGQNPCFRHSIQPQDSRGKSSLMSNQTLGVSSKPLKTQPASKAMTDRRLFSELVAGETLPRTTDEQEKASLVQCVQTFCCRLEELICWLYNVTDVADLSAPPRTSLTGLKSSLQLYRQFKKDVDEHQSLTESVLEKGEILLQCLLDNTPVLKDVLERIAKQSGELESRADHLYDSILASLDMLAGCTLIPDNRPTAAEHPHEGL.

The span at 71 to 80 (SKEPVADRSK) shows a compositional bias: basic and acidic residues. 3 disordered regions span residues 71-92 (SKEPVADRSKPPLRGPLPSASV), 150-207 (GLSQ…SFAN), and 222-244 (VVGAGPPLQGSAQPLTSGSDATG). Residues 178 to 190 (SSRSISASSVGSS) are compositionally biased toward low complexity. Over residues 231–241 (GSAQPLTSGSD) the composition is skewed to polar residues. A Phosphoserine modification is found at S315. The interval 420–442 (PQLKTKEKEPPFPRQKRGRQHVS) is disordered. Phosphoserine is present on residues S453 and S459. Residues 497 to 571 (HSSLQVSDSD…KPLKTQPASK (75 aa)) form a disordered region. The segment covering 540-569 (IQPQDSRGKSSLMSNQTLGVSSKPLKTQPA) has biased composition (polar residues).

Interacts with CNTLN; the interaction recruits CEP68 to the centrosome. Interacts with the SCF(FBXW11) complex which contains SKP1, CUL1 and FBXW11; the interaction is probably mediated by FBXW11 and the complex also contains CDK5RAP2 and PCNT. Also interacts with F-box protein BTRC. Interacts with serine/threonine-protein kinase PLK1; the interaction leads to phosphorylation of CEP68 and its subsequent degradation. Interacts with NEK2; the interaction leads to phosphorylation of CEP68. Phosphorylation by PLK1 is required for binding to BTRC in prometaphase. Phosphorylated directly or indirectly by NEK2. NEK2-mediated phosphorylation promotes CEP68 dissociation from the centrosome and its degradation at the onset of mitosis. Post-translationally, ubiquitinated and targeted for proteasomal degradation in early mitosis by the SCF(BTRC) and/or SCF(FBXW11) E3 ubiquitin-protein ligase complexes. Degradation is complete by prometaphase and is required for removal of CDK5RAP2 from the peripheral pericentriolar material and subsequent centriole separation.

It localises to the cytoplasm. It is found in the cytoskeleton. Its subcellular location is the microtubule organizing center. The protein localises to the centrosome. Involved in maintenance of centrosome cohesion, probably as part of a linker structure which prevents centrosome splitting. Required for localization of CDK5RAP2 to the centrosome during interphase. Contributes to CROCC/rootletin filament formation. This chain is Centrosomal protein of 68 kDa (Cep68), found in Mus musculus (Mouse).